The sequence spans 559 residues: Urocanate hydratase (559 aa).

NAD(+) contacts are provided by residues 49 to 50 (GG), Q127, 173 to 175 (GMG), D193, R198, 239 to 240 (NA), 260 to 264 (QTSAH), 270 to 271 (YL), and Y319. Residue C407 is part of the active site. Position 489 (G489) interacts with NAD(+).

This sequence belongs to the urocanase family. NAD(+) serves as cofactor.

The protein localises to the cytoplasm. It carries out the reaction 4-imidazolone-5-propanoate = trans-urocanate + H2O. The protein operates within amino-acid degradation; L-histidine degradation into L-glutamate; N-formimidoyl-L-glutamate from L-histidine: step 2/3. In terms of biological role, catalyzes the conversion of urocanate to 4-imidazolone-5-propionate. The polypeptide is Urocanate hydratase (Shouchella clausii (strain KSM-K16) (Alkalihalobacillus clausii)).